Consider the following 87-residue polypeptide: Phosphoribosyl-ATP pyrophosphatase (87 aa).

This sequence belongs to the PRA-PH family.

The protein localises to the cytoplasm. The catalysed reaction is 1-(5-phospho-beta-D-ribosyl)-ATP + H2O = 1-(5-phospho-beta-D-ribosyl)-5'-AMP + diphosphate + H(+). Its pathway is amino-acid biosynthesis; L-histidine biosynthesis; L-histidine from 5-phospho-alpha-D-ribose 1-diphosphate: step 2/9. In Nocardioides sp. (strain ATCC BAA-499 / JS614), this protein is Phosphoribosyl-ATP pyrophosphatase.